The sequence spans 224 residues: 7-cyano-7-deazaguanine synthase (224 aa).

L10–V20 contributes to the ATP binding site. The Zn(2+) site is built by C189, C199, C202, and C205.

This sequence belongs to the QueC family. It depends on Zn(2+) as a cofactor.

It catalyses the reaction 7-carboxy-7-deazaguanine + NH4(+) + ATP = 7-cyano-7-deazaguanine + ADP + phosphate + H2O + H(+). Its pathway is purine metabolism; 7-cyano-7-deazaguanine biosynthesis. Functionally, catalyzes the ATP-dependent conversion of 7-carboxy-7-deazaguanine (CDG) to 7-cyano-7-deazaguanine (preQ(0)). The sequence is that of 7-cyano-7-deazaguanine synthase from Pseudomonas paraeruginosa (strain DSM 24068 / PA7) (Pseudomonas aeruginosa (strain PA7)).